A 348-amino-acid polypeptide reads, in one-letter code: 3-isopropylmalate dehydrogenase (348 aa).

76–87 (GPKWTDPNNRPE) is an NAD(+) binding site. Arginine 94, arginine 104, arginine 132, and aspartate 217 together coordinate substrate. The Mg(2+) site is built by aspartate 217, aspartate 241, and aspartate 245. 275–287 (GSAPDIAGKNVAN) lines the NAD(+) pocket.

This sequence belongs to the isocitrate and isopropylmalate dehydrogenases family. LeuB type 1 subfamily. Homodimer. Mg(2+) serves as cofactor. Requires Mn(2+) as cofactor.

Its subcellular location is the cytoplasm. The enzyme catalyses (2R,3S)-3-isopropylmalate + NAD(+) = 4-methyl-2-oxopentanoate + CO2 + NADH. It participates in amino-acid biosynthesis; L-leucine biosynthesis; L-leucine from 3-methyl-2-oxobutanoate: step 3/4. Catalyzes the oxidation of 3-carboxy-2-hydroxy-4-methylpentanoate (3-isopropylmalate) to 3-carboxy-4-methyl-2-oxopentanoate. The product decarboxylates to 4-methyl-2 oxopentanoate. The sequence is that of 3-isopropylmalate dehydrogenase from Staphylococcus aureus (strain COL).